The primary structure comprises 397 residues: P2X purinoceptor 3 (397 aa).

Over 1–20 (MNCISDFFTYETTKSVVVKS) the chain is Cytoplasmic. The chain crosses the membrane as a helical span at residues 21–43 (WTIGIINRAVQLLIISYFVGWVF). At 44–322 (LHEKAYQVRD…AGKFNIIPTI (279 aa)) the chain is on the extracellular side. ATP-binding residues include Lys63 and Lys65. Intrachain disulfides connect Cys107/Cys153, Cys116/Cys137, and Cys122/Cys147. Glu111 is a binding site for Mg(2+). An N-linked (GlcNAc...) asparagine glycan is attached at Asn139. Asp158 lines the Mg(2+) pocket. A Ca(2+)-binding site is contributed by Asp158. Asn170 carries N-linked (GlcNAc...) asparagine glycosylation. Residue Thr172 participates in ATP binding. A glycan (N-linked (GlcNAc...) asparagine) is linked at Asn194. Cystine bridges form between Cys203-Cys213 and Cys247-Cys256. Ser275, Asn279, and Arg281 together coordinate ATP. Asn290 is a glycosylation site (N-linked (GlcNAc...) asparagine). Lys299 is a binding site for ATP. The helical transmembrane segment at 323–341 (ISSVAAFTSVGVGTVLCDI) threads the bilayer. Residues 342–397 (ILLNFLKGADHYKARKFEEVTETTLKGTASTNPVFASDQATVEKQSTDSGAYSIGH) lie on the Cytoplasmic side of the membrane.

Belongs to the P2X receptor family. As to quaternary structure, homotrimer. Forms heterotrimer with P2RX2. Heterotrimeric P2RX2/3 has a ligand dose-response profile that is distinct from either homotrimeric P2RX2 or P2RX3. In terms of tissue distribution, selectively expressed in sensory ganglia.

The protein resides in the cell membrane. The enzyme catalyses Ca(2+)(in) = Ca(2+)(out). The catalysed reaction is Na(+)(in) = Na(+)(out). Has high sensitivity to ATP. Fast activation by external ATP. Exhibits rapid desensitization. Sensitives to the ATP agonist:alpha/beta-methylene-ATP. Subject to allosteric inhibition by AF-219. Mg(2+) and Ca(2+) slow deactivation of P2RX3. Its function is as follows. Extracellular ATP-activated non-selective cation channel. Plays particularly important role in sensory neurons where its activation is critical for gustatory, nociceptive responses, visceral reflexes and sensory hypersensitization. This Rattus norvegicus (Rat) protein is P2X purinoceptor 3 (P2rx3).